The chain runs to 286 residues: E3 ubiquitin-protein ligase SINA-like 7 (286 aa).

The segment at cysteine 51 to threonine 87 adopts an RING-type zinc-finger fold. The SBD stretch occupies residues valine 101–lysine 285. The SIAH-type zinc finger occupies serine 104–methionine 162. Zn(2+) is bound by residues cysteine 109, cysteine 116, histidine 128, cysteine 132, cysteine 139, cysteine 144, histidine 156, and histidine 161.

Belongs to the SINA (Seven in absentia) family.

The enzyme catalyses S-ubiquitinyl-[E2 ubiquitin-conjugating enzyme]-L-cysteine + [acceptor protein]-L-lysine = [E2 ubiquitin-conjugating enzyme]-L-cysteine + N(6)-ubiquitinyl-[acceptor protein]-L-lysine.. Its pathway is protein modification; protein ubiquitination. In terms of biological role, E3 ubiquitin-protein ligase that mediates ubiquitination and subsequent proteasomal degradation of target proteins. E3 ubiquitin ligases accept ubiquitin from an E2 ubiquitin-conjugating enzyme in the form of a thioester and then directly transfers the ubiquitin to targeted substrates. It probably triggers the ubiquitin-mediated degradation of different substrates. This Arabidopsis thaliana (Mouse-ear cress) protein is E3 ubiquitin-protein ligase SINA-like 7.